The sequence spans 636 residues: DNA primase (636 aa).

The CHC2-type zinc finger occupies 44-68; it reads CPFHDEKTPSFHVRPNHGHFHCFGC. Positions 266–352 constitute a Toprim domain; the sequence is HQAVVVEGYT…SGQSFVAVAA (87 aa). Mg(2+) is bound by residues Glu-272, Asp-323, and Asp-325. The segment covering 443–459 has biased composition (basic and acidic residues); that stretch reads REEAKGGGRKDNNRRGQ. Positions 443–481 are disordered; sequence REEAKGGGRKDNNRRGQETAARPKPPPVQRPDPTDPTLW.

Belongs to the DnaG primase family. Monomer. Interacts with DnaB. Requires Zn(2+) as cofactor. The cofactor is Mg(2+).

The catalysed reaction is ssDNA + n NTP = ssDNA/pppN(pN)n-1 hybrid + (n-1) diphosphate.. Functionally, RNA polymerase that catalyzes the synthesis of short RNA molecules used as primers for DNA polymerase during DNA replication. The sequence is that of DNA primase from Mycolicibacterium smegmatis (strain ATCC 700084 / mc(2)155) (Mycobacterium smegmatis).